A 283-amino-acid polypeptide reads, in one-letter code: Alkaline ceramidase (283 aa).

Positions 28, 29, 31, 33, and 42 each coordinate Ca(2+). The next 2 helical transmembrane spans lie at 43 to 63 (FVNT…IMLF) and 69 to 89 (FVTP…LSSM). A Zn(2+)-binding site is contributed by His92. The next 4 membrane-spanning stretches (helical) occupy residues 98–118 (IGQL…FSLF), 134–151 (TFSW…GLSW), 154–174 (PIVN…MLYT), and 187–209 (LGIR…RIFC). Residues His221 and His225 each coordinate Zn(2+). Residues 222 to 242 (GFWHIFIFIAAYTVLVLFAYF) form a helical membrane-spanning segment.

Belongs to the alkaline ceramidase family. The cofactor is Zn(2+). As to expression, expressed in the central midgut of late embryos. In brain, it is present at the interhemispheric junction and in groups of cells in the central brain.

Its subcellular location is the membrane. It carries out the reaction an N-acylsphing-4-enine + H2O = sphing-4-enine + a fatty acid. In terms of biological role, hydrolyzes the sphingolipid ceramide into sphingosine and free fatty acid. This Drosophila melanogaster (Fruit fly) protein is Alkaline ceramidase (bwa).